The sequence spans 160 residues: Oocyte-secreted protein 4B (160 aa).

A signal peptide spans 1 to 13 (MKTSVLLAITAMC).

This sequence belongs to the PLAC1 family.

Its subcellular location is the secreted. The chain is Oocyte-secreted protein 4B from Homo sapiens (Human).